A 559-amino-acid chain; its full sequence is D-2-hydroxyglutarate dehydrogenase, mitochondrial (559 aa).

The N-terminal 78 residues, 1–78 (MMMQKLRRSG…GMLLQQYKCF (78 aa)), are a transit peptide targeting the mitochondrion. Positions 130–309 (YKGSSKLMLL…TKVSILTQPK (180 aa)) constitute an FAD-binding PCMH-type domain.

The protein belongs to the FAD-binding oxidoreductase/transferase type 4 family. Homodimer. It depends on FAD as a cofactor.

The protein resides in the mitochondrion. The enzyme catalyses (R)-2-hydroxyglutarate + A = 2-oxoglutarate + AH2. In terms of biological role, catalyzes the oxidation of (R)-2-hydroxyglutarate to 2-oxoglutarate. May be involved in the catabolism of propionyl-CoA derived from beta-oxidation. Involved in degradation of lysine for the supply of carbon and electrons to the ETF/ETFQO complex during dark-induced sugar starvation. This is D-2-hydroxyglutarate dehydrogenase, mitochondrial (D2HGDH) from Arabidopsis thaliana (Mouse-ear cress).